A 1400-amino-acid chain; its full sequence is DNA-directed RNA polymerase subunit beta' (1400 aa).

The Zn(2+) site is built by Cys70, Cys72, Cys85, and Cys88. The Mg(2+) site is built by Asp460, Asp462, and Asp464. The Zn(2+) site is built by Cys814, Cys887, Cys894, and Cys897.

It belongs to the RNA polymerase beta' chain family. The RNAP catalytic core consists of 2 alpha, 1 beta, 1 beta' and 1 omega subunit. When a sigma factor is associated with the core the holoenzyme is formed, which can initiate transcription. Mg(2+) is required as a cofactor. It depends on Zn(2+) as a cofactor.

The enzyme catalyses RNA(n) + a ribonucleoside 5'-triphosphate = RNA(n+1) + diphosphate. Its function is as follows. DNA-dependent RNA polymerase catalyzes the transcription of DNA into RNA using the four ribonucleoside triphosphates as substrates. This chain is DNA-directed RNA polymerase subunit beta', found in Marinomonas sp. (strain MWYL1).